The chain runs to 194 residues: ATP-dependent Clp protease proteolytic subunit (194 aa).

The active-site Nucleophile is the Ser97. The active site involves His122.

The protein belongs to the peptidase S14 family. As to quaternary structure, fourteen ClpP subunits assemble into 2 heptameric rings which stack back to back to give a disk-like structure with a central cavity, resembling the structure of eukaryotic proteasomes.

The protein resides in the cytoplasm. The catalysed reaction is Hydrolysis of proteins to small peptides in the presence of ATP and magnesium. alpha-casein is the usual test substrate. In the absence of ATP, only oligopeptides shorter than five residues are hydrolyzed (such as succinyl-Leu-Tyr-|-NHMec, and Leu-Tyr-Leu-|-Tyr-Trp, in which cleavage of the -Tyr-|-Leu- and -Tyr-|-Trp bonds also occurs).. In terms of biological role, cleaves peptides in various proteins in a process that requires ATP hydrolysis. Has a chymotrypsin-like activity. Plays a major role in the degradation of misfolded proteins. The polypeptide is ATP-dependent Clp protease proteolytic subunit (Lactobacillus helveticus (strain DPC 4571)).